The sequence spans 877 residues: Alanine--tRNA ligase (877 aa).

Zn(2+) contacts are provided by His-567, His-571, Cys-669, and His-673.

It belongs to the class-II aminoacyl-tRNA synthetase family. Requires Zn(2+) as cofactor.

The protein resides in the cytoplasm. It carries out the reaction tRNA(Ala) + L-alanine + ATP = L-alanyl-tRNA(Ala) + AMP + diphosphate. Functionally, catalyzes the attachment of alanine to tRNA(Ala) in a two-step reaction: alanine is first activated by ATP to form Ala-AMP and then transferred to the acceptor end of tRNA(Ala). Also edits incorrectly charged Ser-tRNA(Ala) and Gly-tRNA(Ala) via its editing domain. The polypeptide is Alanine--tRNA ligase (Rickettsia bellii (strain RML369-C)).